A 168-amino-acid chain; its full sequence is MTTAPSGLPGTPLPPARRRERPRWPLLVAGAAVLGLIGYMVLGNANSNLVYYVLPSEYQQDTAKFAGKTLRMGGLAKDVVYNRDTLALKFNMTDGQVAYPVQYQGAVPDMFRNDAVVVMEGQMQQGVFHGKSLLVKHSEEYKAADSKGEGQYSQDDLKKILNDQSTKP.

Residues 1–23 (MTTAPSGLPGTPLPPARRRERPR) are Cytoplasmic-facing. A helical; Signal-anchor for type II membrane protein transmembrane segment spans residues 24–44 (WPLLVAGAAVLGLIGYMVLGN). Residues 45–168 (ANSNLVYYVL…KILNDQSTKP (124 aa)) are Extracellular-facing. Heme contacts are provided by His-137 and Tyr-141. Positions 145–168 (DSKGEGQYSQDDLKKILNDQSTKP) are disordered.

It belongs to the CcmE/CycJ family.

The protein localises to the cell membrane. In terms of biological role, heme chaperone required for the biogenesis of c-type cytochromes. Transiently binds heme delivered by CcmC and transfers the heme to apo-cytochromes in a process facilitated by CcmF and CcmH. In Deinococcus radiodurans (strain ATCC 13939 / DSM 20539 / JCM 16871 / CCUG 27074 / LMG 4051 / NBRC 15346 / NCIMB 9279 / VKM B-1422 / R1), this protein is Cytochrome c-type biogenesis protein CcmE.